The primary structure comprises 450 residues: Phosphoglucosamine mutase (450 aa).

Ser103 acts as the Phosphoserine intermediate in catalysis. Residues Ser103, Asp243, Asp245, and Asp247 each contribute to the Mg(2+) site. Position 103 is a phosphoserine (Ser103).

Belongs to the phosphohexose mutase family. Mg(2+) serves as cofactor. Activated by phosphorylation.

It carries out the reaction alpha-D-glucosamine 1-phosphate = D-glucosamine 6-phosphate. Its function is as follows. Catalyzes the conversion of glucosamine-6-phosphate to glucosamine-1-phosphate. This is Phosphoglucosamine mutase from Lactobacillus helveticus (strain DPC 4571).